A 143-amino-acid chain; its full sequence is Hemoglobin cathodic subunit alpha (143 aa).

Residue Ser1 is modified to N-acetylserine. The Globin domain occupies 1-143 (SLAPGDKTVV…VCAALSDKYR (143 aa)). His59 serves as a coordination point for O2. Position 89 (His89) interacts with heme b.

The protein belongs to the globin family. As to quaternary structure, heterotetramer of two alpha chains and two beta chains. Red blood cells.

Functionally, involved in oxygen transport from gills to the various peripheral tissues. This is Hemoglobin cathodic subunit alpha from Gymnothorax unicolor (Brown moray).